We begin with the raw amino-acid sequence, 447 residues long: Phosphoglucosamine mutase (447 aa).

Ser-108 (phosphoserine intermediate) is an active-site residue. 4 residues coordinate Mg(2+): Ser-108, Asp-247, Asp-249, and Asp-251. The residue at position 108 (Ser-108) is a Phosphoserine.

Belongs to the phosphohexose mutase family. The cofactor is Mg(2+). Activated by phosphorylation.

It catalyses the reaction alpha-D-glucosamine 1-phosphate = D-glucosamine 6-phosphate. Functionally, catalyzes the conversion of glucosamine-6-phosphate to glucosamine-1-phosphate. This chain is Phosphoglucosamine mutase, found in Bordetella petrii (strain ATCC BAA-461 / DSM 12804 / CCUG 43448).